The primary structure comprises 295 residues: Elongation factor Ts (295 aa).

The segment at 79–82 (TDFV) is involved in Mg(2+) ion dislocation from EF-Tu.

It belongs to the EF-Ts family.

The protein resides in the cytoplasm. Associates with the EF-Tu.GDP complex and induces the exchange of GDP to GTP. It remains bound to the aminoacyl-tRNA.EF-Tu.GTP complex up to the GTP hydrolysis stage on the ribosome. The chain is Elongation factor Ts from Bacillus cytotoxicus (strain DSM 22905 / CIP 110041 / 391-98 / NVH 391-98).